The primary structure comprises 459 residues: UDP-N-acetylmuramate--L-alanine ligase (459 aa).

113 to 119 (GSHGKTT) provides a ligand contact to ATP.

Belongs to the MurCDEF family.

The protein resides in the cytoplasm. The enzyme catalyses UDP-N-acetyl-alpha-D-muramate + L-alanine + ATP = UDP-N-acetyl-alpha-D-muramoyl-L-alanine + ADP + phosphate + H(+). It functions in the pathway cell wall biogenesis; peptidoglycan biosynthesis. Cell wall formation. In Persephonella marina (strain DSM 14350 / EX-H1), this protein is UDP-N-acetylmuramate--L-alanine ligase.